The primary structure comprises 627 residues: BEL1-like homeodomain protein 4 (627 aa).

Residues 206-225 (SSQHHHHQVVGHFGSSSSSP) form a disordered region. Over residues 215–225 (VGHFGSSSSSP) the composition is skewed to low complexity. The SR/KY domain stretch occupies residues 241–257 (SKYTKPAQELLEEFCSV). Residues 263 to 307 (KKNKLSRNNSNPNTTGGGGGGGSSSSAGTANDSPPLSPADRIEHQ) are disordered. A BELL domain region spans residues 302 to 373 (DRIEHQRRKV…CLKDAVAVQL (72 aa)). The segment at residues 424–486 (AWRPQRGLPE…NARVRLWKPM (63 aa)) is a DNA-binding region (homeobox). A disordered region spans residues 494–530 (EAKEREEAEEENENQQQQRRQQQTNNNDTKPNNNENN). Over residues 507-530 (NQQQQRRQQQTNNNDTKPNNNENN) the composition is skewed to low complexity.

Belongs to the TALE/BELL homeobox family. As to quaternary structure, may form heterodimeric complexes with TALE/KNOX proteins. Interacts with OFP1, OFP2 and OFP5. Interacts with KNATM, isoform KNATM-B. As to expression, expressed in lateral organs.

It is found in the nucleus. Functionally, transcription factor that establishes leaf shape by repressing growth in specific subdomains of the leaf. Negatively regulates knox homeobox gene KNAT1/BP expression. This is BEL1-like homeodomain protein 4 (BLH4) from Arabidopsis thaliana (Mouse-ear cress).